A 358-amino-acid chain; its full sequence is UDP-N-acetylglucosamine--N-acetylmuramyl-(pentapeptide) pyrophosphoryl-undecaprenol N-acetylglucosamine transferase (358 aa).

UDP-N-acetyl-alpha-D-glucosamine contacts are provided by residues 10–12, N124, R165, S191, I246, and Q291; that span reads TGG.

Belongs to the glycosyltransferase 28 family. MurG subfamily.

It is found in the cell inner membrane. It carries out the reaction di-trans,octa-cis-undecaprenyl diphospho-N-acetyl-alpha-D-muramoyl-L-alanyl-D-glutamyl-meso-2,6-diaminopimeloyl-D-alanyl-D-alanine + UDP-N-acetyl-alpha-D-glucosamine = di-trans,octa-cis-undecaprenyl diphospho-[N-acetyl-alpha-D-glucosaminyl-(1-&gt;4)]-N-acetyl-alpha-D-muramoyl-L-alanyl-D-glutamyl-meso-2,6-diaminopimeloyl-D-alanyl-D-alanine + UDP + H(+). The protein operates within cell wall biogenesis; peptidoglycan biosynthesis. Cell wall formation. Catalyzes the transfer of a GlcNAc subunit on undecaprenyl-pyrophosphoryl-MurNAc-pentapeptide (lipid intermediate I) to form undecaprenyl-pyrophosphoryl-MurNAc-(pentapeptide)GlcNAc (lipid intermediate II). This is UDP-N-acetylglucosamine--N-acetylmuramyl-(pentapeptide) pyrophosphoryl-undecaprenol N-acetylglucosamine transferase from Citrifermentans bemidjiense (strain ATCC BAA-1014 / DSM 16622 / JCM 12645 / Bem) (Geobacter bemidjiensis).